A 119-amino-acid chain; its full sequence is Large ribosomal subunit protein uL14 (119 aa).

It belongs to the universal ribosomal protein uL14 family. As to quaternary structure, part of the 50S ribosomal subunit. Forms a cluster with proteins L3 and L19. In the 70S ribosome, L14 and L19 interact and together make contacts with the 16S rRNA in bridges B5 and B8.

In terms of biological role, binds to 23S rRNA. Forms part of two intersubunit bridges in the 70S ribosome. This chain is Large ribosomal subunit protein uL14, found in Wolbachia sp. subsp. Brugia malayi (strain TRS).